A 391-amino-acid polypeptide reads, in one-letter code: Pyridinium-3,5-bisthiocarboxylic acid mononucleotide nickel insertion protein (391 aa).

This sequence belongs to the LarC family.

It catalyses the reaction Ni(II)-pyridinium-3,5-bisthiocarboxylate mononucleotide = pyridinium-3,5-bisthiocarboxylate mononucleotide + Ni(2+). Functionally, involved in the biosynthesis of a nickel-pincer cofactor ((SCS)Ni(II) pincer complex). Binds Ni(2+), and functions in nickel delivery to pyridinium-3,5-bisthiocarboxylic acid mononucleotide (P2TMN), to form the mature cofactor. Is thus probably required for the activation of nickel-pincer cofactor-dependent enzymes. In Staphylococcus saprophyticus subsp. saprophyticus (strain ATCC 15305 / DSM 20229 / NCIMB 8711 / NCTC 7292 / S-41), this protein is Pyridinium-3,5-bisthiocarboxylic acid mononucleotide nickel insertion protein.